Reading from the N-terminus, the 2345-residue chain is Nonribisomal peptide synthetase malG (2345 aa).

The segment at 226 to 620 (FSEQAKKNPT…VGRMGTVVKV (395 aa)) is adenylation 1. One can recognise a Carrier 1 domain in the interval 766 to 839 (TENETLLRLL…EAAGTMISAG (74 aa)). Serine 800 bears the O-(pantetheine 4'-phosphoryl)serine mark. The segment at 877 to 1292 (EEIYPSTPLQ…LLCPSDKSKL (416 aa)) is condensation 1. Residues 1317–1707 (VRSERTAVSA…GRKNREVKLR (391 aa)) are adenylation 2. Residues 1843-1926 (QPHESTALFV…DIARLIEGVK (84 aa)) enclose the Carrier 2 domain. At serine 1885 the chain carries O-(pantetheine 4'-phosphoryl)serine. The tract at residues 1969 to 2256 (GMSVFLTGGT…PRQLNALQSE (288 aa)) is reductase (R) domain.

This sequence belongs to the NRP synthetase family.

The enzyme catalyses L-proline + L-tryptophan + 2 ATP + NADPH = (S)-3-(indol-3-ylmethyl)-6,7,8,8a-tetrahydropyrrolo[1,2-a]pyrazin-1-one + 2 AMP + 2 diphosphate + NADP(+) + H2O + H(+). Nonribisomal peptide synthetase; part of the gene cluster that mediates the biosynthesis of malbrancheamide, a dichlorinated fungal indole alkaloid that belongs to a family of natural products containing a characteristic bicyclo[2.2.2]diazaoctane core. The first step of malbrancheamide biosynthesis involves coupling of L-proline and L-tryptophan by malG, a bimodular NRPS, to produce L-Pro-L-Trp aldehyde through reductive offloading. This compound undergoes spontaneous cyclization and dehydration to give a dienamine which is reverse prenylated at C-2 by malE. The other prenyltransferase present in the cluster, malB, displays modest activity, suggesting that may be a redundant gene in the pathway. Subsequently, a [4+2] Diels-Alder cyclo-addition catalyzed by the bifunctional enzyme malC forms the characteristic bicyclo[2.2.2]diazaoctane ring of premalbrancheamid. Finally, the flavin-dependent halogenase malA catalyzes the iterative dichlorination of the indole ring of premalbrancheamide to yield C-9 monochlorinated malbrancheamide B, C-8 monochlorinated isomalbrancheamide B, and dichlorinated malbrancheamide. MalA is also able to brominate premalbrancheamide at C-9 to yield malbrancheamide C, and, to a lesser extend, at C-8 to yield isomalbrancheamide C. Finally, malA can brominate C-9 monochlorinated malbrancheamide B at C-8 to yield malbrancheamide D, or C-8 monochlorinated isomalbrancheamide B at C-9 to produce isomalbrancheamide D. The sequence is that of Nonribisomal peptide synthetase malG from Malbranchea aurantiaca.